Reading from the N-terminus, the 463-residue chain is uncharacterized protein (463 aa).

The protein belongs to the UbiD family.

This is an uncharacterized protein from Rhodospirillum rubrum.